The following is an 82-amino-acid chain: M-theraphotoxin-Gr1a (82 aa).

A signal peptide spans 1–21 (MKTSVVFVIAGLALLSVVCYA). Positions 22 to 46 (SELKEQSSVNEVLSTIFHFEQPEER) are excised as a propeptide. Intrachain disulfides connect Cys48–Cys63, Cys55–Cys69, and Cys62–Cys76. A Phenylalanine amide modification is found at Phe80.

It belongs to the neurotoxin 10 (Hwtx-1) family. 52 (MTx4) subfamily. In terms of tissue distribution, expressed by the venom gland.

The protein resides in the secreted. This cationic hydrophobic peptide acts on a lot of different channels and has an antimicrobial activity. It blocks mechanosensitive ion channels (also named stretch-activated channels or SACs), without having effect on whole-cell voltage-sensitive currents. It also affects acetylcholine receptors (nAChRs) through interactions with membrane lipids by prolonging the closing time without affecting channel conductance or opening activity. It shows high affinity for lipid bilayers. It acts by partitioning into the membrane and perturbing the interface between the channel and the lipid bilayer without necessarily being in physical contact with the channel. It inhibits atrial fibrillation as well as the membrane motor of outer hair cells at low doses. It also binds to the voltage sensor of voltage-gated potassium channels from the archaebacterium Aeropyrum pernix (KvAP) without affecting channel gating. It also shows a low inhibition on a large spectra of sodium channels (Nav1.1/SCN1A, Nav1.2/SCN2A, Nav1.3/SCN3A, Nav1.4/SCN4A, Nav1.5/SCN5A, Nav1.6/SCN8A, Nav1.7/SCN9A) (IC(50)=7.4-14 uM), and potassium channels Kv11.1/KCNH2 and Kv11.2/KCNH6 (IC(50)=11 uM for both). It exhibits antimicrobial activities against the Gram-positive bacteria B.subtilis (MIC=0.5 uM), S.aureus (MIC=2-4 uM), and S.epidermidis (MIC=4-8 uM), and Gram-negative bacteria S.typhimurium (MIC=32.64 uM), P.aeruginosa (MIC=8-16 uM), and E.coli (MIC=8-16 uM). The sequence is that of M-theraphotoxin-Gr1a from Grammostola rosea (Chilean rose tarantula).